A 526-amino-acid polypeptide reads, in one-letter code: Aspartate ammonia-lyase (526 aa).

The segment at methionine 1 to arginine 44 is disordered. The span at alanine 10–aspartate 20 shows a compositional bias: basic and acidic residues. Positions glycine 24–alanine 39 are enriched in polar residues. L-aspartate contacts are provided by threonine 155, serine 194, threonine 195, asparagine 196, and threonine 241. An SS loop region spans residues glycine 371 to asparagine 380. The active-site Proton acceptor is the serine 372. 2 residues coordinate L-aspartate: serine 373 and lysine 378.

The protein belongs to the class-II fumarase/aspartase family. Aspartase subfamily. As to quaternary structure, homotetramer.

The enzyme catalyses L-aspartate = fumarate + NH4(+). Catalyzes the reversible conversion of L-aspartate to fumarate and ammonia. This Corynebacterium glutamicum (strain ATCC 13032 / DSM 20300 / JCM 1318 / BCRC 11384 / CCUG 27702 / LMG 3730 / NBRC 12168 / NCIMB 10025 / NRRL B-2784 / 534) protein is Aspartate ammonia-lyase.